A 405-amino-acid chain; its full sequence is NAC transcription factor NAM-A1 (405 aa).

The segment covering M1–S10 has biased composition (low complexity). Residues M1–R38 are disordered. The NAC domain maps to L33 to K204. A DNA-binding region spans residues L137–A210.

Expressed in flag leaves, green spikes and peduncles.

Its subcellular location is the nucleus. Transcription factor of the NAC family associated with the grain protein content (GPC). Accelerates senescence and increases nutrient remobilization from leaves to developing grains. The tetraploid cultivated wheat (T.durum) contains one additional gene coding for a functional protein (NAM-B2) and one extra pseudogene (NAM-B1). The protein is NAC transcription factor NAM-A1 (NAM-A1) of Triticum turgidum subsp. durum (Durum wheat).